We begin with the raw amino-acid sequence, 365 residues long: tRNA N6-adenosine threonylcarbamoyltransferase (365 aa).

2 residues coordinate Fe cation: His-119 and His-123. Substrate-binding positions include 141 to 145 (LVSGG), Asp-174, Gly-187, and Asn-288. Asp-316 is a Fe cation binding site.

Belongs to the KAE1 / TsaD family. The cofactor is Fe(2+).

It localises to the cytoplasm. The catalysed reaction is L-threonylcarbamoyladenylate + adenosine(37) in tRNA = N(6)-L-threonylcarbamoyladenosine(37) in tRNA + AMP + H(+). Functionally, required for the formation of a threonylcarbamoyl group on adenosine at position 37 (t(6)A37) in tRNAs that read codons beginning with adenine. Is involved in the transfer of the threonylcarbamoyl moiety of threonylcarbamoyl-AMP (TC-AMP) to the N6 group of A37, together with TsaE and TsaB. TsaD likely plays a direct catalytic role in this reaction. The sequence is that of tRNA N6-adenosine threonylcarbamoyltransferase from Rhizobium leguminosarum bv. trifolii (strain WSM2304).